The sequence spans 100 residues: Integration host factor subunit alpha (100 aa).

Positions 50-70 (GNFQLRDKPQRPGRNPKTGEE) are disordered.

Belongs to the bacterial histone-like protein family. As to quaternary structure, heterodimer of an alpha and a beta chain.

Its function is as follows. This protein is one of the two subunits of integration host factor, a specific DNA-binding protein that functions in genetic recombination as well as in transcriptional and translational control. This is Integration host factor subunit alpha from Chromobacterium violaceum (strain ATCC 12472 / DSM 30191 / JCM 1249 / CCUG 213 / NBRC 12614 / NCIMB 9131 / NCTC 9757 / MK).